The following is an 845-amino-acid chain: Protein TSD2 (845 aa).

The disordered stretch occupies residues 193–283 (DVDSDSESDS…SASATRLTNA (91 aa)). Basic and acidic residues-rich tracts occupy residues 202-212 (SDSHSDSHSDS) and 230-242 (ARSH…DGSG). Residues 243-272 (GKRKRGSHSPLSRRRQRHKQGQRHKPRHRS) are compositionally biased toward basic residues.

It belongs to the CDC45 family.

Its subcellular location is the nucleus. In terms of biological role, temperature-sensitive protein required for DNA synthesis. May be a transcription factor that regulates the level or influences the stability of DNA polymerases or auxiliary proteins. In Mycosarcoma maydis (Corn smut fungus), this protein is Protein TSD2 (TSD2).